The chain runs to 266 residues: Nuclease (266 aa).

A signal peptide spans 1–21 (MRFNNKMLALAALLFAAQASA). A disulfide bridge links Cys-30 with Cys-34. Catalysis depends on His-110, which acts as the Proton acceptor. Asn-140 is a binding site for Mg(2+). Cys-222 and Cys-264 are disulfide-bonded.

Belongs to the DNA/RNA non-specific endonuclease family. Homodimer. Mg(2+) is required as a cofactor.

It localises to the secreted. It carries out the reaction Endonucleolytic cleavage to 5'-phosphomononucleotide and 5'-phosphooligonucleotide end-products.. Functionally, catalyzes the hydrolysis of both DNA and RNA, double- or single-stranded, at the 3'position of the phosphodiester bond to produce 5'-phosphorylated mono-, di-, tri- and tetranucleotides. DNA is a slightly better substrate than RNA. This Serratia marcescens protein is Nuclease (nucA).